The sequence spans 249 residues: Probable hydroxyacylglutathione hydrolase ECU02_0580 (249 aa).

7 residues coordinate Zn(2+): H75, H77, D79, H80, H126, D144, and H183. Residues 183–185 (HDY) and 240–243 (RERK) contribute to the substrate site.

Belongs to the metallo-beta-lactamase superfamily. Glyoxalase II family. It depends on Zn(2+) as a cofactor.

The protein resides in the cytoplasm. It localises to the nucleus. It carries out the reaction an S-(2-hydroxyacyl)glutathione + H2O = a 2-hydroxy carboxylate + glutathione + H(+). The protein operates within secondary metabolite metabolism; methylglyoxal degradation; (R)-lactate from methylglyoxal: step 2/2. Thiolesterase that catalyzes the hydrolysis of S-D-lactoyl-glutathione to form glutathione and D-lactic acid. The protein is Probable hydroxyacylglutathione hydrolase ECU02_0580 of Encephalitozoon cuniculi (strain GB-M1) (Microsporidian parasite).